A 151-amino-acid polypeptide reads, in one-letter code: MATKPDSRISWLQLLQRGQHYMKTWPAEKQLAPLFPENRVARATRFGIRIMPPLAVFTLTWQIALGGQLGPAIATALFACSLPLQGLWWLGRRSVTPLPPTLAQWFHEIRHKLLESGQALAPLEEAPTYQTLADVLKRAFNQLDKTFLDDL.

The next 2 helical transmembrane spans lie at 46-66 (FGIRIMPPLAVFTLTWQIALG) and 69-89 (LGPAIATALFACSLPLQGLWW).

It belongs to the UPF0208 family.

It is found in the cell inner membrane. The chain is UPF0208 membrane protein ECA3038 from Pectobacterium atrosepticum (strain SCRI 1043 / ATCC BAA-672) (Erwinia carotovora subsp. atroseptica).